The following is a 655-amino-acid chain: tRNA 5-methylaminomethyl-2-thiouridine biosynthesis bifunctional protein MnmC (655 aa).

The interval 1 to 236 (MTDPLVPAVL…KRAMLVGRFA (236 aa)) is tRNA (mnm(5)s(2)U34)-methyltransferase. Residues 260 to 655 (IGTGLAGCAA…LRALRQGTAS (396 aa)) form an FAD-dependent cmnm(5)s(2)U34 oxidoreductase region.

This sequence in the N-terminal section; belongs to the methyltransferase superfamily. tRNA (mnm(5)s(2)U34)-methyltransferase family. In the C-terminal section; belongs to the DAO family. It depends on FAD as a cofactor.

Its subcellular location is the cytoplasm. It carries out the reaction 5-aminomethyl-2-thiouridine(34) in tRNA + S-adenosyl-L-methionine = 5-methylaminomethyl-2-thiouridine(34) in tRNA + S-adenosyl-L-homocysteine + H(+). Its function is as follows. Catalyzes the last two steps in the biosynthesis of 5-methylaminomethyl-2-thiouridine (mnm(5)s(2)U) at the wobble position (U34) in tRNA. Catalyzes the FAD-dependent demodification of cmnm(5)s(2)U34 to nm(5)s(2)U34, followed by the transfer of a methyl group from S-adenosyl-L-methionine to nm(5)s(2)U34, to form mnm(5)s(2)U34. The protein is tRNA 5-methylaminomethyl-2-thiouridine biosynthesis bifunctional protein MnmC of Paraburkholderia phymatum (strain DSM 17167 / CIP 108236 / LMG 21445 / STM815) (Burkholderia phymatum).